A 143-amino-acid chain; its full sequence is MAAEGRVQRVASEFQKVISLLLRTRIKDAKLASATITEVDLSKDLSYAKIYYTCLAIEDAEYIDKAFEKSKGFFRSSIAKSLSLRIVPNLKFIYDTSLDYGMQMEEKIQQALEADSKIIKQDDKSLQENYKQNDKETKAEKLR.

A disordered region spans residues 123-143 (DKSLQENYKQNDKETKAEKLR).

Belongs to the RbfA family. Monomer. Binds 30S ribosomal subunits, but not 50S ribosomal subunits or 70S ribosomes.

It is found in the cytoplasm. One of several proteins that assist in the late maturation steps of the functional core of the 30S ribosomal subunit. Associates with free 30S ribosomal subunits (but not with 30S subunits that are part of 70S ribosomes or polysomes). Required for efficient processing of 16S rRNA. May interact with the 5'-terminal helix region of 16S rRNA. The polypeptide is Ribosome-binding factor A (Francisella tularensis subsp. mediasiatica (strain FSC147)).